The sequence spans 484 residues: Phospholipase A1-Ialpha2, chloroplastic (484 aa).

The N-terminal 63 residues, 1-63 (MALIQNPNMK…LAPVILNSPV (63 aa)), are a transit peptide targeting the chloroplast. Residues 295 to 299 (GHSMG) carry the GXSXG motif. S297 serves as the catalytic Acyl-ester intermediate. Catalysis depends on charge relay system residues D360 and H411.

The protein belongs to the AB hydrolase superfamily. Lipase family. As to expression, ubiquitous. Highest expression in flowers and leaves.

The protein localises to the plastid. It is found in the chloroplast. The protein resides in the plastoglobule. The catalysed reaction is a 1,2-diacyl-3-O-[alpha-D-galactosyl-(1-&gt;6)-beta-D-galactosyl]-sn-glycerol + H2O = acyl-3-O-[alpha-D-galactosyl-(1-&gt;6)-beta-D-galactosyl]-sn-glycerol + a fatty acid + H(+). It catalyses the reaction a 1,2-diacyl-3-O-(beta-D-galactosyl)-sn-glycerol + H2O = an acyl-3-O-(beta-D-galactosyl)-sn-glycerol + a fatty acid + H(+). Acylhydrolase that catalyzes the hydrolysis of phosphatidylcholine at the sn-1 position. Has a strong galactolipase activity toward monogalactosyldiacylglycerol (MGDG) and digalactosyldiacylglycerol (DGDG). Low triacylglycerol (TAG) lipase activity. Plays a role in plant growth and in leaf senescence. This chain is Phospholipase A1-Ialpha2, chloroplastic, found in Arabidopsis thaliana (Mouse-ear cress).